Here is a 501-residue protein sequence, read N- to C-terminus: Zinc finger and SCAN domain-containing protein 12 (501 aa).

Residues Lys-20 and Lys-26 each participate in a glycyl lysine isopeptide (Lys-Gly) (interchain with G-Cter in SUMO2) cross-link. The region spanning 51–132 (QFCYQETSGP…DLERELDELG (82 aa)) is the SCAN box domain. The segment at 175 to 194 (REAQEEQVSGVETGNEPRNV) is disordered. The segment covering 180–194 (EQVSGVETGNEPRNV) has biased composition (polar residues). Residue Lys-197 forms a Glycyl lysine isopeptide (Lys-Gly) (interchain with G-Cter in SUMO2) linkage. The interval 223–255 (EAHNPGEESSGISHEDSQPLRNENGVNSPANSE) is disordered. The segment covering 241-253 (PLRNENGVNSPAN) has biased composition (polar residues). 6 consecutive C2H2-type zinc fingers follow at residues 269 to 291 (HGCD…KRVH), 297 to 319 (YKCE…KVVH), 325 to 347 (YKCN…QRLH), 353 to 375 (YHCN…LKSH), 381 to 403 (YQCL…QGVH), and 409 to 431 (YECN…QETH). A disordered region spans residues 429–450 (ETHHKEKPFTQSGPIQQQRNHT). Polar residues predominate over residues 437–447 (FTQSGPIQQQR). The segment at 455 to 477 (YKCSVCGKAFIQKISLIEHEQIH) adopts a C2H2-type 7 zinc-finger fold. The segment at 483-501 (YKCAEGGKAFIQMSELTEH) adopts a C2H2-type 8; degenerate zinc-finger fold.

This sequence belongs to the krueppel C2H2-type zinc-finger protein family. Testis specific.

Its subcellular location is the nucleus. In terms of biological role, may be involved in transcriptional regulation. In Mus musculus (Mouse), this protein is Zinc finger and SCAN domain-containing protein 12 (Zscan12).